We begin with the raw amino-acid sequence, 672 residues long: DNA-directed RNA polymerase subunit gamma (672 aa).

Residues Cys-70, Cys-72, Cys-85, and Cys-88 each coordinate Zn(2+). Asp-466, Asp-468, and Asp-470 together coordinate Mg(2+).

It belongs to the RNA polymerase beta' chain family. RpoC1 subfamily. In terms of assembly, in cyanobacteria the RNAP catalytic core is composed of 2 alpha, 1 beta, 1 beta', 1 gamma and 1 omega subunit. When a sigma factor is associated with the core the holoenzyme is formed, which can initiate transcription. The cofactor is Mg(2+). Requires Zn(2+) as cofactor.

The enzyme catalyses RNA(n) + a ribonucleoside 5'-triphosphate = RNA(n+1) + diphosphate. In terms of biological role, DNA-dependent RNA polymerase catalyzes the transcription of DNA into RNA using the four ribonucleoside triphosphates as substrates. This is DNA-directed RNA polymerase subunit gamma from Trichodesmium erythraeum (strain IMS101).